The primary structure comprises 108 residues: Nucleoid-associated protein BamMC406_1737 (108 aa).

Polar residues predominate over residues 85-95; that stretch reads ATSQEKMSGMT. Residues 85–108 are disordered; sequence ATSQEKMSGMTSGLPLPPGFKLPF. The span at 99–108 shows a compositional bias: pro residues; it reads PLPPGFKLPF.

It belongs to the YbaB/EbfC family. Homodimer.

It localises to the cytoplasm. The protein localises to the nucleoid. Functionally, binds to DNA and alters its conformation. May be involved in regulation of gene expression, nucleoid organization and DNA protection. The sequence is that of Nucleoid-associated protein BamMC406_1737 from Burkholderia ambifaria (strain MC40-6).